We begin with the raw amino-acid sequence, 86 residues long: Cell division topological specificity factor (86 aa).

Belongs to the MinE family.

Prevents the cell division inhibition by proteins MinC and MinD at internal division sites while permitting inhibition at polar sites. This ensures cell division at the proper site by restricting the formation of a division septum at the midpoint of the long axis of the cell. The polypeptide is Cell division topological specificity factor (Shewanella pealeana (strain ATCC 700345 / ANG-SQ1)).